A 298-amino-acid chain; its full sequence is Serpentine receptor class delta-34 (298 aa).

6 helical membrane passes run 10–30, 54–74, 99–119, 158–178, 207–227, and 242–262; these read SSIMTMEANFFMCIIVVFTQV, ACFFSFDFFQLVFDASSFAIP, MILLSSYLLSLIVGVIYVITY, LATNLNMISIFVPPIMSIVFI, LTIQTLVPAVCVIPIYIAHLI, and VLYMMLSLPTAIDAFIVIVTI.

The protein belongs to the nematode receptor-like protein srd family.

The protein localises to the membrane. In Caenorhabditis elegans, this protein is Serpentine receptor class delta-34 (srd-34).